Here is a 201-residue protein sequence, read N- to C-terminus: Regulator of G-protein signaling 1 (201 aa).

One can recognise an RGS domain in the interval 75 to 191 (SLEKLLISED…LKSEIFLRLA (117 aa)).

Its subcellular location is the cell membrane. The protein resides in the cytoplasm. It is found in the cytosol. In terms of biological role, regulates G protein-coupled receptor signaling cascades, including signaling downstream of the N-formylpeptide chemoattractant receptors and leukotriene receptors. Inhibits B cell chemotaxis. Inhibits signal transduction by increasing the GTPase activity of G protein alpha subunits, thereby driving them into their inactive GDP-bound form. This chain is Regulator of G-protein signaling 1 (rgs1), found in Xenopus tropicalis (Western clawed frog).